The chain runs to 167 residues: Small heat shock protein C1 (167 aa).

Positions 59–167 (PLYESNSIKS…EQDAREITIN (109 aa)) constitute a sHSP domain.

The protein belongs to the small heat shock protein (HSP20) family.

This is Small heat shock protein C1 (hspC1) from Rickettsia felis (strain ATCC VR-1525 / URRWXCal2) (Rickettsia azadi).